Consider the following 353-residue polypeptide: Photosystem II D2 protein (353 aa).

Threonine 2 is subject to N-acetylthreonine. Residue threonine 2 is modified to Phosphothreonine. The helical transmembrane segment at 41 to 61 (CAYFALGGWFTGTTFVTSWYT) threads the bilayer. Histidine 118 is a binding site for chlorophyll a. Residues 125-141 (GFMLRQFELARSVQLRP) form a helical membrane-spanning segment. Residues glutamine 130 and asparagine 143 each coordinate pheophytin a. A helical transmembrane segment spans residues 153–166 (VFVSVFLIYPLGQS). Histidine 198 is a chlorophyll a binding site. The helical transmembrane segment at 208-228 (AALLCAIHGATVENTLFEDGD) threads the bilayer. A plastoquinone contacts are provided by histidine 215 and phenylalanine 262. Position 215 (histidine 215) interacts with Fe cation. Position 269 (histidine 269) interacts with Fe cation. A helical membrane pass occupies residues 279–295 (GLWMSAIGVVGLALNLR).

Belongs to the reaction center PufL/M/PsbA/D family. PSII is composed of 1 copy each of membrane proteins PsbA, PsbB, PsbC, PsbD, PsbE, PsbF, PsbH, PsbI, PsbJ, PsbK, PsbL, PsbM, PsbT, PsbX, PsbY, PsbZ, Psb30/Ycf12, at least 3 peripheral proteins of the oxygen-evolving complex and a large number of cofactors. It forms dimeric complexes. The D1/D2 heterodimer binds P680, chlorophylls that are the primary electron donor of PSII, and subsequent electron acceptors. It shares a non-heme iron and each subunit binds pheophytin, quinone, additional chlorophylls, carotenoids and lipids. There is also a Cl(-1) ion associated with D1 and D2, which is required for oxygen evolution. The PSII complex binds additional chlorophylls, carotenoids and specific lipids. is required as a cofactor.

It localises to the plastid. Its subcellular location is the chloroplast thylakoid membrane. The catalysed reaction is 2 a plastoquinone + 4 hnu + 2 H2O = 2 a plastoquinol + O2. In terms of biological role, photosystem II (PSII) is a light-driven water:plastoquinone oxidoreductase that uses light energy to abstract electrons from H(2)O, generating O(2) and a proton gradient subsequently used for ATP formation. It consists of a core antenna complex that captures photons, and an electron transfer chain that converts photonic excitation into a charge separation. The D1/D2 (PsbA/PsbD) reaction center heterodimer binds P680, the primary electron donor of PSII as well as several subsequent electron acceptors. D2 is needed for assembly of a stable PSII complex. The polypeptide is Photosystem II D2 protein (Oryza nivara (Indian wild rice)).